The following is a 715-amino-acid chain: Polyribonucleotide nucleotidyltransferase (715 aa).

The Mg(2+) site is built by Asp-490 and Asp-496. The region spanning 557–616 (PRIETMTIPTDKIREVIGSGGKVIREIVETSGAKVDISDDGTIKIASANADSIKKAYDMI) is the KH domain. Positions 626 to 694 (GKIYVGKVVK…DRGKVRLGMK (69 aa)) constitute an S1 motif domain.

Belongs to the polyribonucleotide nucleotidyltransferase family. It depends on Mg(2+) as a cofactor.

It localises to the cytoplasm. The enzyme catalyses RNA(n+1) + phosphate = RNA(n) + a ribonucleoside 5'-diphosphate. Functionally, involved in mRNA degradation. Catalyzes the phosphorolysis of single-stranded polyribonucleotides processively in the 3'- to 5'-direction. The chain is Polyribonucleotide nucleotidyltransferase from Paracoccus denitrificans (strain Pd 1222).